A 785-amino-acid polypeptide reads, in one-letter code: Phenylalanine--tRNA ligase beta subunit (785 aa).

Positions 39–148 (APAFSGVVIA…ADAPVGQSIR (110 aa)) constitute a tRNA-binding domain. In terms of domain architecture, B5 spans 399–474 (PKRQAVQLRA…RVYGYNNIPA (76 aa)). Mg(2+) is bound by residues Asp452, Asp458, Glu461, and Glu462. An FDX-ACB domain is found at 692-784 (SKFQPVRRDL…AASELGAQLR (93 aa)).

Belongs to the phenylalanyl-tRNA synthetase beta subunit family. Type 1 subfamily. As to quaternary structure, tetramer of two alpha and two beta subunits. Mg(2+) serves as cofactor.

Its subcellular location is the cytoplasm. The catalysed reaction is tRNA(Phe) + L-phenylalanine + ATP = L-phenylalanyl-tRNA(Phe) + AMP + diphosphate + H(+). This chain is Phenylalanine--tRNA ligase beta subunit, found in Chromobacterium violaceum (strain ATCC 12472 / DSM 30191 / JCM 1249 / CCUG 213 / NBRC 12614 / NCIMB 9131 / NCTC 9757 / MK).